Consider the following 202-residue polypeptide: GTP cyclohydrolase 1 (202 aa).

The Zn(2+) site is built by C90, H93, and C163.

The protein belongs to the GTP cyclohydrolase I family. Homomer.

It catalyses the reaction GTP + H2O = 7,8-dihydroneopterin 3'-triphosphate + formate + H(+). It participates in cofactor biosynthesis; 7,8-dihydroneopterin triphosphate biosynthesis; 7,8-dihydroneopterin triphosphate from GTP: step 1/1. This Mycobacterium marinum (strain ATCC BAA-535 / M) protein is GTP cyclohydrolase 1.